We begin with the raw amino-acid sequence, 878 residues long: MutS protein homolog 4 (878 aa).

Residues 22-41 (NSSNSISKPSTKKSIRNQKS) form a disordered region. 634 to 641 (GCNMSGKS) is a binding site for ATP.

Belongs to the DNA mismatch repair MutS family. In terms of assembly, heterooligomer of MSH4 and MSH5.

Functionally, involved in meiotic recombination. Facilitate crossovers between homologs during meiosis. This is MutS protein homolog 4 (MSH4) from Saccharomyces cerevisiae (strain ATCC 204508 / S288c) (Baker's yeast).